A 651-amino-acid polypeptide reads, in one-letter code: DNA mismatch repair protein MutL (651 aa).

The disordered stretch occupies residues 383-405 (TAAEEPTPAPTSPDLEIGDLDDQ).

It belongs to the DNA mismatch repair MutL/HexB family.

In terms of biological role, this protein is involved in the repair of mismatches in DNA. It is required for dam-dependent methyl-directed DNA mismatch repair. May act as a 'molecular matchmaker', a protein that promotes the formation of a stable complex between two or more DNA-binding proteins in an ATP-dependent manner without itself being part of a final effector complex. This Lacticaseibacillus paracasei (strain ATCC 334 / BCRC 17002 / CCUG 31169 / CIP 107868 / KCTC 3260 / NRRL B-441) (Lactobacillus paracasei) protein is DNA mismatch repair protein MutL.